A 301-amino-acid chain; its full sequence is Thyroxine 5-deiodinase (301 aa).

The Cytoplasmic segment spans residues 1-41 (MSRQAAPRWVVGEGRGTLGGAATMLRSLLLHSLRLCSQTAS). The chain crosses the membrane as a helical; Signal-anchor for type II membrane protein span at residues 42–64 (CLVLFPRFLGTAFMLWLLDFLCI). The Extracellular portion of the chain corresponds to 65–301 (RKHLLGRRRR…QLHGPQPRRV (237 aa)). The active site involves Sec-167. A non-standard amino acid (selenocysteine) is located at residue Sec-167.

Belongs to the iodothyronine deiodinase family. Monomer. Homodimer. May undergo minor heretodimerization with DIO1 and DIO2. Highly expressed in mammary gland. Detected at lower levels in kidney, and at very low levels in the other tissues.

The protein resides in the cell membrane. The protein localises to the endosome membrane. It carries out the reaction 3,3',5'-triiodo-L-thyronine + iodide + A + H(+) = L-thyroxine + AH2. The enzyme catalyses 3,3'-diiodo-L-thyronine + iodide + A + H(+) = 3,3',5-triiodo-L-thyronine + AH2. It catalyses the reaction 3-iodo-L-thyronine + iodide + A + H(+) = 3,5-diiodo-L-thyronine + AH2. The catalysed reaction is L-thyronine + iodide + A + H(+) = 3-iodo-L-thyronine + AH2. It carries out the reaction 3',5'-diiodo-L-thyronine + iodide + A + H(+) = 3,3',5'-triiodo-L-thyronine + AH2. The enzyme catalyses 3'-iodo-L-thyronine + iodide + A + H(+) = 3,3'-diiodo-L-thyronine + AH2. It catalyses the reaction 3,3',5'-triiodothyronamine + iodide + A + H(+) = 3,3',5,5'-tetraiodothyronamine + AH2. The catalysed reaction is 3',5'-diiodothyronamine + iodide + A + H(+) = 3,3',5'-triiodothyronamine + AH2. It carries out the reaction 3,3'-diiodothyronamine + iodide + A + H(+) = 3,3',5-triiodothyronamine + AH2. The enzyme catalyses 3-iodothyronamine + iodide + A + H(+) = 3,5-diiodothyronamine + AH2. It catalyses the reaction 3'-iodothyronamine + iodide + A + H(+) = 3,3'-diiodothyronamine + AH2. The catalysed reaction is thyronamine + iodide + A + H(+) = 3-iodothyronamine + AH2. Functionally, plays a crucial role in the metabolism of thyroid hormones (TH) and has specific roles in TH activation and inactivation by deiodination. Catalyzes the deiodination of L-thyroxine (T4) to 3,3',5'-triiodothyronine (rT3), 3,5,3'-triiodothyronine (T3) to 3,3'-diiodothyronine (3,3'-T2), 3,5-diiodothyronine (3,5-T2) to 3-monoiodothyronine (3-T1), rT3 to 3',5'-diiodothyronine (3',5'-T2) and 3,3'-T2 to 3'-monoiodothyronine (3'-T1) via inner-ring deiodination (IRD). Catalyzes the deiodination of 3-T1 to L-thyronine (T0) via outer-ring deiodination (ORD). Catalyzes the tyrosyl ring deiodinations of 3,3',5,5'-tetraiodothyronamine, 3,3',5'-triiodothyronamine, 3,5,3'-triiodothyronamine, 3,5-diiodothyronamine, 3,3'-diiodothyronamine and 3-iodothyronamine. This Bos taurus (Bovine) protein is Thyroxine 5-deiodinase (DIO3).